The primary structure comprises 315 residues: Isoaspartyl peptidase/L-asparaginase 1 (315 aa).

Ser169 carries the post-translational modification Phosphoserine. The active-site Nucleophile is Thr183. Substrate contacts are provided by residues 211 to 214 and 233 to 236; these read RIGD and TGKG.

The protein belongs to the Ntn-hydrolase family. In terms of assembly, heterotetramer of two alpha and two beta chains arranged as a dimer of alpha/beta heterodimers. Cleaved into an alpha and beta chain by autocatalysis; this activates the enzyme. The N-terminal residue of the beta subunit is responsible for the nucleophile hydrolase activity.

It catalyses the reaction Cleavage of a beta-linked Asp residue from the N-terminus of a polypeptide.. In terms of biological role, acts in asparagine catabolism but also in the final steps of protein and degradation via hydrolysis of a range of isoaspartyl dipeptides. The affinity for Asn and at least 4 isoaspartyl dipeptides (L-beta-Asp-Ala, L-beta-Asp-Gly, L-beta-Asp-Leu, L-beta-Asp-Phe) is quite low, KM being greater than 4.0 mM. The enzyme is inactive on alpha-aspartyl dipeptides. This chain is Isoaspartyl peptidase/L-asparaginase 1, found in Arabidopsis thaliana (Mouse-ear cress).